Here is a 190-residue protein sequence, read N- to C-terminus: Elongation factor P-like protein (190 aa).

Belongs to the elongation factor P family.

This Cronobacter sakazakii (strain ATCC BAA-894) (Enterobacter sakazakii) protein is Elongation factor P-like protein.